The sequence spans 721 residues: MAPSYDQPYSVLLDRNIYDPDNLCEGIDLRRHHAADLEDVGAFRCQEDWRRLVGPLERPFRGGLGPQFSFITVAVPNCIPERMEITSYALEFGFIHDDVIDEHIEDADLSDMEEGLEQGAKTGSIDERGASGKRVIAAQIMREMMAIDPERAMVVAKSWAAGVQHSARREELTNFQTLDEYIPYRSLDVGYMLWHGLVTFGCAITIPPEEEALCTEFLTPALCAASLVNDLFSFEKEKNDANIQNAVYIVMKEHGCDEAEGRERLKARIRQEMAKFVQIVKDTKTRSDLSDDTKRYIDVMQYTLSGNVVWSAQCPRYNLKAEWNELQMLRAKHGVAKYPATFPPADGSMDHIWKKGSTQGESKGEKRKRQSVNGTNGVNGTNGVKKPTISRVGVDSLQLNEVVSLALSTDLPNLTTDVVLQPYAYITSMPSKGFRDQAVDSINNWLKTPAKATKKIKEIINMLHTASLMLDDLEDNSPLRRGKPSTHNVYGASQTINSATYQFTHATALAAGLSNPDCLRIFNEEINELYVGQSYDLYWTHNIICPTFGEYLRMVDMKTGGLFRMLTRLMTAESPLNGQISDSELNPLGCLIGRFFQIRDDYQNLVSAEYAQQKGFAEDLDEGKYSFTLIHCIRTLEANPSLAGEQMQLRALLMKRRVEGKLTNEAKREILDTMKKTQSLEYTLEVLRELHTKLDNEVGRLEKKFGDDNFALRLMMEMLKV.

Positions 5 to 325 (YDQPYSVLLD…RYNLKAEWNE (321 aa)) are (7Z)-ophiobola-7,19-dien-3-ol synthase. The Mg(2+) site is built by aspartate 97 and aspartate 101. Aspartate 97 lines the substrate pocket. A DDXXD 1 motif is present at residues 97 to 101 (DDVID). Residues 185 to 188 (RSLD), asparagine 229, 233 to 237 (SFEKE), and 316 to 317 (RY) contribute to the substrate site. Residues 229 to 237 (NDLFSFEKE) carry the NSE/DTE motif. The interval 326 to 721 (LQMLRAKHGV…LRLMMEMLKV (396 aa)) is geranylfarnesyl diphosphate synthase. The interval 348-387 (SMDHIWKKGSTQGESKGEKRKRQSVNGTNGVNGTNGVKKP) is disordered. The span at 372–384 (VNGTNGVNGTNGV) shows a compositional bias: low complexity. Lysine 432, arginine 435, and histidine 464 together coordinate isopentenyl diphosphate. Residues aspartate 471 and aspartate 475 each contribute to the Mg(2+) site. The short motif at 471–475 (DDLED) is the DDXXD 2 element. Arginine 480 serves as a coordination point for dimethylallyl diphosphate. Residue arginine 481 participates in isopentenyl diphosphate binding. Dimethylallyl diphosphate-binding residues include lysine 558, threonine 559, glutamine 597, asparagine 604, lysine 614, and lysine 624.

In the N-terminal section; belongs to the terpene synthase family. It in the C-terminal section; belongs to the FPP/GGPP synthase family. Requires Mg(2+) as cofactor.

The enzyme catalyses isopentenyl diphosphate + (2E,6E)-farnesyl diphosphate = (2E,6E,10E)-geranylgeranyl diphosphate + diphosphate. The catalysed reaction is isopentenyl diphosphate + (2E,6E,10E)-geranylgeranyl diphosphate = (2E,6E,10E,14E)-geranylfarnesyl diphosphate + diphosphate. It carries out the reaction (2E,6E,10E,14E)-geranylfarnesyl diphosphate + H2O = ophiobolin F + diphosphate. It participates in secondary metabolite biosynthesis; terpenoid biosynthesis. In terms of biological role, bifunctional sesterterpene synthase; part of the gene cluster that mediates the biosynthesis of the sesterterpenes ophiobolins, fungal phytotoxins with potential anti-cancer activities. The first step of the pathway is performed by the sesterterpene synthase oblA that possesses both prenyl transferase and terpene cyclase activity, converting isopentenyl diphosphate and dimethylallyl diphosphate into geranylfarnesyl diphosphate (GFPP) and further converting GFPP into ophiobolin F, respectively. Other sesterterpenoids (C(25) terpenoids) are found as minor products of oblA. The cytochrome P450 monooxygenase oblB then catalyzes a four-step oxidative transformation of ophiobolin F to yield ophiobolin C. The FAD-dependent oxidoreductase oblC might be involved in a later oxidation step that produces ophiobolin A. The polypeptide is Ophiobolin F synthase oblA (Cochliobolus heterostrophus (strain C5 / ATCC 48332 / race O) (Southern corn leaf blight fungus)).